A 133-amino-acid chain; its full sequence is p53 and DNA damage-regulated protein 1 (133 aa).

This sequence belongs to the prefoldin subunit beta family. Component of the PAQosome complex which is responsible for the biogenesis of several protein complexes and which consists of R2TP complex members RUVBL1, RUVBL2, RPAP3 and PIH1D1, URI complex members PFDN2, PFDN6, PDRG1, UXT and URI1 as well as ASDURF, POLR2E and DNAAF10/WDR92.

Its subcellular location is the cytoplasm. Functionally, may play a role in chaperone-mediated protein folding. This chain is p53 and DNA damage-regulated protein 1 (Pdrg1), found in Rattus norvegicus (Rat).